Reading from the N-terminus, the 1305-residue chain is Contactin-associated protein like 5-1 (1305 aa).

The first 24 residues, 1-24 (MDSLQRLNGLLTLVLSALWHLGLT), serve as a signal peptide directing secretion. The F5/8 type C domain occupies 25–174 (ASNYNCDDPL…IGMRVEAYGC (150 aa)). Laminin G-like domains are found at residues 180-360 (VADF…TFSC) and 367-544 (PITF…IDLC). Asparagine 282 carries N-linked (GlcNAc...) asparagine glycosylation. Residues cysteine 329 and cysteine 360 are joined by a disulfide bond. A glycan (N-linked (GlcNAc...) asparagine) is linked at asparagine 496. 3 cysteine pairs are disulfide-bonded: cysteine 512/cysteine 544, cysteine 550/cysteine 561, and cysteine 555/cysteine 570. In terms of domain architecture, EGF-like 1 spans 546–583 (IKDRCLPNYCEHGGHCAQTWTTFYCNCSDTGYTGATCH). A glycan (N-linked (GlcNAc...) asparagine) is linked at asparagine 571. An intrachain disulfide couples cysteine 572 to cysteine 582. Residues 584 to 790 (DSIYEQSCEV…LRCNGDRHFW (207 aa)) enclose the Fibrinogen C-terminal domain. N-linked (GlcNAc...) asparagine glycosylation occurs at asparagine 622. Residues 791-956 (NAVSFSTEAS…KLMSGVTPGC (166 aa)) enclose the Laminin G-like 3 domain. 4 disulfides stabilise this stretch: cysteine 929–cysteine 956, cysteine 960–cysteine 973, cysteine 967–cysteine 982, and cysteine 984–cysteine 994. One can recognise an EGF-like 2 domain in the interval 957 to 995 (PGHCSSYSSNCHNGGKCVEKQSGYSCDCTNSPNEGPFCQ). The region spanning 1014 to 1198 (EPYLVIKNTS…VHGTLTESGC (185 aa)) is the Laminin G-like 4 domain. A glycan (N-linked (GlcNAc...) asparagine) is linked at asparagine 1057. Cysteines 1163 and 1198 form a disulfide. A helical membrane pass occupies residues 1238-1258 (VIGGIIAVVTFVTFCVIGIMI).

The protein belongs to the neurexin family.

It is found in the membrane. Functionally, may play a role in the correct development and proper functioning of the peripheral and central nervous system and be involved in cell adhesion and intercellular communication. The polypeptide is Contactin-associated protein like 5-1 (Cntnap5a) (Rattus norvegicus (Rat)).